An 856-amino-acid chain; its full sequence is Translation initiation factor IF-2 (856 aa).

The 171-residue stretch at 356 to 526 (PRAPVVTVMG…LLIADLLELK (171 aa)) folds into the tr-type G domain. Positions 365–372 (GHVDHGKT) are G1. 365-372 (GHVDHGKT) is a GTP binding site. The segment at 390-394 (GITQH) is G2. The segment at 412–415 (DTPG) is G3. Residues 412–416 (DTPGH) and 466–469 (NKID) contribute to the GTP site. Residues 466-469 (NKID) form a G4 region. Positions 502–504 (SAK) are G5.

It belongs to the TRAFAC class translation factor GTPase superfamily. Classic translation factor GTPase family. IF-2 subfamily.

It localises to the cytoplasm. Functionally, one of the essential components for the initiation of protein synthesis. Protects formylmethionyl-tRNA from spontaneous hydrolysis and promotes its binding to the 30S ribosomal subunits. Also involved in the hydrolysis of GTP during the formation of the 70S ribosomal complex. The protein is Translation initiation factor IF-2 of Ehrlichia ruminantium (strain Gardel).